A 194-amino-acid chain; its full sequence is Orotate phosphoribosyltransferase (194 aa).

117–125 (EDIVTTGLS) provides a ligand contact to 5-phospho-alpha-D-ribose 1-diphosphate. Residues T121 and R149 each coordinate orotate.

The protein belongs to the purine/pyrimidine phosphoribosyltransferase family. PyrE subfamily. In terms of assembly, homodimer. Mg(2+) is required as a cofactor.

The catalysed reaction is orotidine 5'-phosphate + diphosphate = orotate + 5-phospho-alpha-D-ribose 1-diphosphate. The protein operates within pyrimidine metabolism; UMP biosynthesis via de novo pathway; UMP from orotate: step 1/2. In terms of biological role, catalyzes the transfer of a ribosyl phosphate group from 5-phosphoribose 1-diphosphate to orotate, leading to the formation of orotidine monophosphate (OMP). In Parvibaculum lavamentivorans (strain DS-1 / DSM 13023 / NCIMB 13966), this protein is Orotate phosphoribosyltransferase.